A 614-amino-acid polypeptide reads, in one-letter code: Syringomycin synthase SyrB1 (614 aa).

A Carrier domain is found at 535–610 (KGLSEQEHFV…VLADHITRSL (76 aa)). Serine 570 carries the O-(pantetheine 4'-phosphoryl)serine modification.

Belongs to the ATP-dependent AMP-binding enzyme family. Requires pantetheine 4'-phosphate as cofactor.

It carries out the reaction holo-[peptidyl-carrier protein] + L-threonine + ATP = L-threonyl-[peptidyl-carrier protein] + AMP + diphosphate. Functionally, involved in the biosynthesis of syringomycin E, a cyclic lipodepsinonapeptide toxin with phytotoxic activity. Specifically adenylates L-threonine and loads it onto its peptidyl carrier domain, via a thioester linkage to the phosphopanthetheine moiety. Is highly specific for L-threonine. The sequence is that of Syringomycin synthase SyrB1 from Pseudomonas syringae pv. syringae.